Reading from the N-terminus, the 194-residue chain is KLMALQLLLWHSALWMVQEATPLGPTSSLPQSFLLKCLEQVRKVQADGTALQERLCAAHKLCHPEELVLLGHALGIPQAPLSSCSSQALQLTGCLRQLHSGLFLYQGLLQALAGISPELAPTLDMLQLDITDFAINIWQQMEDVGMAPAVPPTQGTMPTFTSAFQRRAGGTLVASNLQSFLEVAYRALRHFTKP.

A signal peptide spans 1-20 (KLMALQLLLWHSALWMVQEA). Disulfide bonds link Cys56–Cys62 and Cys84–Cys94. Thr153 carries an O-linked (GalNAc...) threonine glycan.

Belongs to the IL-6 superfamily. In terms of assembly, monomer. Post-translationally, O-glycosylated.

The protein localises to the secreted. Granulocyte/macrophage colony-stimulating factors are cytokines that act in hematopoiesis by controlling the production, differentiation, and function of 2 related white cell populations of the blood, the granulocytes and the monocytes-macrophages. This CSF induces granulocytes. This Felis catus (Cat) protein is Granulocyte colony-stimulating factor (CSF3).